A 20-amino-acid chain; its full sequence is Brevinin-1ITb (20 aa).

Met-8 is subject to Methionine sulfoxide; partial. Cys-14 and Cys-20 are oxidised to a cystine.

Belongs to the frog skin active peptide (FSAP) family. Brevinin subfamily. As to expression, expressed by the skin glands.

The protein localises to the secreted. Its function is as follows. Antimicrobial peptide. This is Brevinin-1ITb from Rana italica (Italian stream frog).